The sequence spans 151 residues: UPF0178 protein Ping_0754 (151 aa).

Belongs to the UPF0178 family.

The protein is UPF0178 protein Ping_0754 of Psychromonas ingrahamii (strain DSM 17664 / CCUG 51855 / 37).